We begin with the raw amino-acid sequence, 234 residues long: Large ribosomal subunit protein uL1 (234 aa).

Belongs to the universal ribosomal protein uL1 family. Part of the 50S ribosomal subunit.

Binds directly to 23S rRNA. The L1 stalk is quite mobile in the ribosome, and is involved in E site tRNA release. Its function is as follows. Protein L1 is also a translational repressor protein, it controls the translation of the L11 operon by binding to its mRNA. In terms of biological role, peptides originating from the N-terminal end of L1 have antibacterial activity against bacteria such as E.coli and B.megaterium and modest antifungal activities. Has no effect on H.pylori itself. Peptides are not hemolytic against mammalian cells. These peptides may be released in the stomach during altruistic lysis to kill other fast growing bacteria. The sequence is that of Large ribosomal subunit protein uL1 from Helicobacter pylori (strain ATCC 700392 / 26695) (Campylobacter pylori).